The sequence spans 511 residues: Histidine ammonia-lyase (511 aa).

The segment at residues 142–144 (ASG) is a cross-link (5-imidazolinone (Ala-Gly)). Ser-143 bears the 2,3-didehydroalanine (Ser) mark.

It belongs to the PAL/histidase family. Post-translationally, contains an active site 4-methylidene-imidazol-5-one (MIO), which is formed autocatalytically by cyclization and dehydration of residues Ala-Ser-Gly.

The protein localises to the cytoplasm. The catalysed reaction is L-histidine = trans-urocanate + NH4(+). Its pathway is amino-acid degradation; L-histidine degradation into L-glutamate; N-formimidoyl-L-glutamate from L-histidine: step 1/3. The sequence is that of Histidine ammonia-lyase from Rhizobium rhizogenes (strain K84 / ATCC BAA-868) (Agrobacterium radiobacter).